Consider the following 230-residue polypeptide: 2,3-bisphosphoglycerate-dependent phosphoglycerate mutase (230 aa).

Residues 8–15 (RHGESEWN), 21–22 (TG), R60, 87–90 (ERHY), K98, 114–115 (RR), and 183–184 (GN) contribute to the substrate site. The active-site Tele-phosphohistidine intermediate is the H9. Residue E87 is the Proton donor/acceptor of the active site.

It belongs to the phosphoglycerate mutase family. BPG-dependent PGAM subfamily.

It catalyses the reaction (2R)-2-phosphoglycerate = (2R)-3-phosphoglycerate. The protein operates within carbohydrate degradation; glycolysis; pyruvate from D-glyceraldehyde 3-phosphate: step 3/5. Catalyzes the interconversion of 2-phosphoglycerate and 3-phosphoglycerate. This is 2,3-bisphosphoglycerate-dependent phosphoglycerate mutase from Streptococcus agalactiae serotype Ia (strain ATCC 27591 / A909 / CDC SS700).